We begin with the raw amino-acid sequence, 191 residues long: MKRSKVERQSMLKEKIELTPFVTDEQLAKEFHVSIQTIRLDRMELAIPELRERIKHVATNQWNETVKALPLEEVIGEVIDLELDERAISIMDITPDLVFSRNKIARGHHIFAQANSLAVAVINDELALTAKSNLKFTRQVNEGERVIAKAIVKGKDNRDRTIVEVSSYVENELVFTGEFFMFHSSNEKGEN.

It belongs to the FapR family.

In terms of biological role, transcriptional factor involved in regulation of membrane lipid biosynthesis by repressing genes involved in fatty acid and phospholipid metabolism. The chain is Transcription factor FapR from Oceanobacillus iheyensis (strain DSM 14371 / CIP 107618 / JCM 11309 / KCTC 3954 / HTE831).